The primary structure comprises 436 residues: MSNFFENYLRQVDDIETVSFVGRVQKIKGLLVESLGPQCAIGDLCLIDQRNGKKVCAEVLGFNGPYVSLMAYEGFSGIEVGNKVYSLNKGLEINLSDELLGRVIDSLGRPIDNKGSFLNNSYKELIFEKINPINRSIFEDQILTGVKVLDGFLPVAKGQRVGIFSGSGVGKSTLLGMIAKNSNADVNVIAFIGERGRELNEFIEHELGEERLKKSVLVVSTSDESPISRYKGAYVATMIAEYFREQGKDVALLFDSITRFANAKREMSLSLGEPPVAKGYPPSVFVEIPILLERSGFNGNGGSVTGFYTVLVEGDDFTEPVADNIKAVLDGHIILDRDLFDRGIYPSINVLSSTSRSIHRIMSLEKQKLIMKARNLLSIYKDYEDLIRTGIYLKGSNKDVDFAISKYPKIINFISQGINETFDFENLEDEIKEILS.

Serine 165–serine 172 lines the ATP pocket.

Belongs to the ATPase alpha/beta chains family.

Its subcellular location is the cytoplasm. It catalyses the reaction ATP + H2O + 4 H(+)(in) = ADP + phosphate + 5 H(+)(out). Its function is as follows. Probable catalytic subunit of a protein translocase for flagellum-specific export, or a proton translocase involved in local circuits at the flagellum. May be involved in a specialized protein export pathway that proceeds without signal peptide cleavage. The sequence is that of Flagellum-specific ATP synthase (fliI) from Borreliella burgdorferi (strain ATCC 35210 / DSM 4680 / CIP 102532 / B31) (Borrelia burgdorferi).